Reading from the N-terminus, the 268-residue chain is Phosphatidylglycerol--prolipoprotein diacylglyceryl transferase (268 aa).

The next 4 membrane-spanning stretches (helical) occupy residues 14 to 34 (LGPI…FAGW), 57 to 77 (LTFY…IIFY), 90 to 110 (FFLW…LIAF), and 117 to 137 (IGAN…IGLG). Arg-140 contributes to the a 1,2-diacyl-sn-glycero-3-phospho-(1'-sn-glycerol) binding site. The next 3 membrane-spanning stretches (helical) occupy residues 174–194 (QLFE…LVTI), 200–220 (YLVL…CEFF), and 240–260 (ILSI…FIKI).

The protein belongs to the Lgt family.

The protein resides in the cell inner membrane. The catalysed reaction is L-cysteinyl-[prolipoprotein] + a 1,2-diacyl-sn-glycero-3-phospho-(1'-sn-glycerol) = an S-1,2-diacyl-sn-glyceryl-L-cysteinyl-[prolipoprotein] + sn-glycerol 1-phosphate + H(+). The protein operates within protein modification; lipoprotein biosynthesis (diacylglyceryl transfer). Its function is as follows. Catalyzes the transfer of the diacylglyceryl group from phosphatidylglycerol to the sulfhydryl group of the N-terminal cysteine of a prolipoprotein, the first step in the formation of mature lipoproteins. The protein is Phosphatidylglycerol--prolipoprotein diacylglyceryl transferase of Francisella tularensis subsp. tularensis (strain FSC 198).